A 131-amino-acid chain; its full sequence is Hydrogenase maturation factor HypA (131 aa).

H2 is a Ni(2+) binding site. Zn(2+)-binding residues include C74, C77, C91, and C94.

This sequence belongs to the HypA/HybF family.

Involved in the maturation of [NiFe] hydrogenases. Required for nickel insertion into the metal center of the hydrogenase. This Streptomyces avermitilis (strain ATCC 31267 / DSM 46492 / JCM 5070 / NBRC 14893 / NCIMB 12804 / NRRL 8165 / MA-4680) protein is Hydrogenase maturation factor HypA.